A 293-amino-acid polypeptide reads, in one-letter code: MMRIALFLLTNLAVMVVFGLVLSLTGIQSSSVTGLLIMALLFGFGGSIVSLLMSKWMALKSVGGEVIEAPRNETERWLMDTVAQQSRQAGIAMPQVAIYHAPDINAFATGARRDASLVAVSTGLLQNMSRDEAEAVIAHEISHIANGDMVTMTLIQGVVNTFVIFISRIIAQVAAGFLGGNRDEGEESNGNPLIYFAVATVLELVFGILASIITMWFSRYREFHADAGSAKLVGREKMIAALQRLKTSYEPQEASSMMAFCINGKSKSLSELFMTHPPLDKRIEALRSGEYLK.

2 helical membrane-spanning segments follow: residues 4-24 (IALFLLTNLAVMVVFGLVLSL) and 32-52 (VTGLLIMALLFGFGGSIVSLL). H139 lines the Zn(2+) pocket. E140 is an active-site residue. Residue H143 coordinates Zn(2+). Transmembrane regions (helical) follow at residues 158–178 (VVNTFVIFISRIIAQVAAGFL) and 193–213 (LIYFAVATVLELVFGILASII). E222 provides a ligand contact to Zn(2+).

The protein belongs to the peptidase M48B family. The cofactor is Zn(2+).

It is found in the cell inner membrane. The polypeptide is Protease HtpX (Cronobacter sakazakii (strain ATCC BAA-894) (Enterobacter sakazakii)).